Consider the following 257-residue polypeptide: NAD-capped RNA hydrolase NudC (257 aa).

Substrate contacts are provided by Lys-25 and Arg-69. Cys-98 and Cys-101 together coordinate Zn(2+). Glu-111 provides a ligand contact to substrate. Residues Cys-116 and Cys-119 each coordinate Zn(2+). Tyr-124 contacts substrate. The 124-residue stretch at 125-248 (PQIAPCIIVA…TVARRLIEDT (124 aa)) folds into the Nudix hydrolase domain. A divalent metal cation is bound by residues Ala-158, Glu-174, and Glu-178. The Nudix box motif lies at 159–180 (GFVEVGETLEQAVAREVMEESG). 192–199 (QPWPFPQS) is a binding site for substrate. Residue Glu-219 coordinates a divalent metal cation. A substrate-binding site is contributed by Ala-241.

The protein belongs to the Nudix hydrolase family. NudC subfamily. In terms of assembly, homodimer. Mg(2+) serves as cofactor. Mn(2+) is required as a cofactor. Requires Zn(2+) as cofactor.

It carries out the reaction a 5'-end NAD(+)-phospho-ribonucleoside in mRNA + H2O = a 5'-end phospho-adenosine-phospho-ribonucleoside in mRNA + beta-nicotinamide D-ribonucleotide + 2 H(+). The enzyme catalyses NAD(+) + H2O = beta-nicotinamide D-ribonucleotide + AMP + 2 H(+). It catalyses the reaction NADH + H2O = reduced beta-nicotinamide D-ribonucleotide + AMP + 2 H(+). Its function is as follows. mRNA decapping enzyme that specifically removes the nicotinamide adenine dinucleotide (NAD) cap from a subset of mRNAs by hydrolyzing the diphosphate linkage to produce nicotinamide mononucleotide (NMN) and 5' monophosphate mRNA. The NAD-cap is present at the 5'-end of some mRNAs and stabilizes RNA against 5'-processing. Has preference for mRNAs with a 5'-end purine. Catalyzes the hydrolysis of a broad range of dinucleotide pyrophosphates. This Escherichia coli O127:H6 (strain E2348/69 / EPEC) protein is NAD-capped RNA hydrolase NudC.